Reading from the N-terminus, the 141-residue chain is Hemoglobin subunit alpha-1 (141 aa).

The Globin domain occupies 1 to 141; the sequence is VLTDEDKARV…LSKDLVSKYR (141 aa). His58 contributes to the O2 binding site. Position 87 (His87) interacts with heme b.

Belongs to the globin family. As to quaternary structure, heterotetramer of two alpha chains and two beta chains. In terms of tissue distribution, red blood cells.

In terms of biological role, involved in oxygen transport from the lung to the various peripheral tissues. The polypeptide is Hemoglobin subunit alpha-1 (Naja naja (Indian cobra)).